Reading from the N-terminus, the 145-residue chain is Glutaconyl-CoA decarboxylase subunit gamma (145 aa).

Residues 52 to 82 are disordered; that stretch reads APAPAAAPAAAPAPAAKPAAAAPAGSVTVSA. Over residues 57-75 the composition is skewed to low complexity; it reads AAPAAAPAPAAKPAAAAPA. The 69-residue stretch at 77–145 folds into the Biotinyl-binding domain; that stretch reads SVTVSAPMPG…VATGDVMVIL (69 aa). Lys112 is modified (N6-biotinyllysine).

As to quaternary structure, heterooctamer consisting of two alpha, two beta, two gamma and two delta subunits. Biotin serves as cofactor.

It carries out the reaction (2E)-glutaconyl-CoA + Na(+)(in) + H(+) = (2E)-butenoyl-CoA + Na(+)(out) + CO2. Its pathway is amino-acid degradation; L-glutamate degradation via hydroxyglutarate pathway; crotonoyl-CoA from L-glutamate: step 5/5. In terms of biological role, biotin carrier subunit of the primary sodium pump glutaconyl-CoA decarboxylase (GCD). The protein is Glutaconyl-CoA decarboxylase subunit gamma (gcdC) of Acidaminococcus fermentans (strain ATCC 25085 / DSM 20731 / CCUG 9996 / CIP 106432 / VR4).